Here is a 417-residue protein sequence, read N- to C-terminus: Serine hydroxymethyltransferase (417 aa).

Residues Leu117 and 121–123 (GHL) contribute to the (6S)-5,6,7,8-tetrahydrofolate site. Position 226 is an N6-(pyridoxal phosphate)lysine (Lys226).

The protein belongs to the SHMT family. Homodimer. The cofactor is pyridoxal 5'-phosphate.

It is found in the cytoplasm. The enzyme catalyses (6R)-5,10-methylene-5,6,7,8-tetrahydrofolate + glycine + H2O = (6S)-5,6,7,8-tetrahydrofolate + L-serine. It participates in one-carbon metabolism; tetrahydrofolate interconversion. It functions in the pathway amino-acid biosynthesis; glycine biosynthesis; glycine from L-serine: step 1/1. In terms of biological role, catalyzes the reversible interconversion of serine and glycine with tetrahydrofolate (THF) serving as the one-carbon carrier. This reaction serves as the major source of one-carbon groups required for the biosynthesis of purines, thymidylate, methionine, and other important biomolecules. Also exhibits THF-independent aldolase activity toward beta-hydroxyamino acids, producing glycine and aldehydes, via a retro-aldol mechanism. This is Serine hydroxymethyltransferase from Shouchella clausii (strain KSM-K16) (Alkalihalobacillus clausii).